We begin with the raw amino-acid sequence, 369 residues long: Cobalt-precorrin-5B C(1)-methyltransferase (369 aa).

It belongs to the CbiD family.

The catalysed reaction is Co-precorrin-5B + S-adenosyl-L-methionine = Co-precorrin-6A + S-adenosyl-L-homocysteine. It participates in cofactor biosynthesis; adenosylcobalamin biosynthesis; cob(II)yrinate a,c-diamide from sirohydrochlorin (anaerobic route): step 6/10. Its function is as follows. Catalyzes the methylation of C-1 in cobalt-precorrin-5B to form cobalt-precorrin-6A. This chain is Cobalt-precorrin-5B C(1)-methyltransferase, found in Leptospira borgpetersenii serovar Hardjo-bovis (strain JB197).